The sequence spans 146 residues: Hemoglobin subunit beta (146 aa).

Residues 2–146 (HWTAEEKQLI…VAHALARKYH (145 aa)) form the Globin domain. Residues His63 and His92 each coordinate heme b.

Belongs to the globin family. Heterotetramer of two alpha chains and two beta chains. As to expression, red blood cells.

In terms of biological role, involved in oxygen transport from the lung to the various peripheral tissues. The chain is Hemoglobin subunit beta (HBB) from Aquila chrysaetos (Golden eagle).